Consider the following 125-residue polypeptide: Holo-[acyl-carrier-protein] synthase (125 aa).

Residues aspartate 8 and glutamate 60 each contribute to the Mg(2+) site.

Belongs to the P-Pant transferase superfamily. AcpS family. Requires Mg(2+) as cofactor.

Its subcellular location is the cytoplasm. The catalysed reaction is apo-[ACP] + CoA = holo-[ACP] + adenosine 3',5'-bisphosphate + H(+). Its function is as follows. Transfers the 4'-phosphopantetheine moiety from coenzyme A to a Ser of acyl-carrier-protein. The sequence is that of Holo-[acyl-carrier-protein] synthase from Wolbachia sp. subsp. Brugia malayi (strain TRS).